Reading from the N-terminus, the 321-residue chain is Ribose-phosphate pyrophosphokinase 2 (321 aa).

Positions 130, 132, and 145 each coordinate Mg(2+). Ser-172 carries the post-translational modification Phosphoserine.

It belongs to the ribose-phosphate pyrophosphokinase family.

The protein resides in the cytoplasm. It catalyses the reaction D-ribose 5-phosphate + ATP = 5-phospho-alpha-D-ribose 1-diphosphate + AMP + H(+). It participates in metabolic intermediate biosynthesis; 5-phospho-alpha-D-ribose 1-diphosphate biosynthesis; 5-phospho-alpha-D-ribose 1-diphosphate from D-ribose 5-phosphate (route I): step 1/1. 5-phosphoribose 1-diphosphate synthase involved in nucleotide, histidine, and tryptophan biosynthesis. Active in heteromultimeric complexes with other 5-phosphoribose 1-diphosphate synthases. The protein is Ribose-phosphate pyrophosphokinase 2 of Schizosaccharomyces pombe (strain 972 / ATCC 24843) (Fission yeast).